A 337-amino-acid chain; its full sequence is Holliday junction branch migration complex subunit RuvB (337 aa).

A large ATPase domain (RuvB-L) region spans residues 4-184 (ADRLIQPQVL…FGIPLRLEFY (181 aa)). ATP is bound by residues arginine 24, glycine 65, lysine 68, threonine 69, threonine 70, 131 to 133 (EDY), arginine 174, tyrosine 184, and arginine 221. Threonine 69 is a binding site for Mg(2+). The small ATPAse domain (RuvB-S) stretch occupies residues 185–255 (NVKDLCTIVT…VAQQALDMLD (71 aa)). Residues 258 to 337 (QEGFDYLDRK…FNIITPDVPK (80 aa)) are head domain (RuvB-H). Residues arginine 294, arginine 313, and arginine 318 each contribute to the DNA site.

It belongs to the RuvB family. Homohexamer. Forms an RuvA(8)-RuvB(12)-Holliday junction (HJ) complex. HJ DNA is sandwiched between 2 RuvA tetramers; dsDNA enters through RuvA and exits via RuvB. An RuvB hexamer assembles on each DNA strand where it exits the tetramer. Each RuvB hexamer is contacted by two RuvA subunits (via domain III) on 2 adjacent RuvB subunits; this complex drives branch migration. In the full resolvosome a probable DNA-RuvA(4)-RuvB(12)-RuvC(2) complex forms which resolves the HJ.

The protein localises to the cytoplasm. The enzyme catalyses ATP + H2O = ADP + phosphate + H(+). Functionally, the RuvA-RuvB-RuvC complex processes Holliday junction (HJ) DNA during genetic recombination and DNA repair, while the RuvA-RuvB complex plays an important role in the rescue of blocked DNA replication forks via replication fork reversal (RFR). RuvA specifically binds to HJ cruciform DNA, conferring on it an open structure. The RuvB hexamer acts as an ATP-dependent pump, pulling dsDNA into and through the RuvAB complex. RuvB forms 2 homohexamers on either side of HJ DNA bound by 1 or 2 RuvA tetramers; 4 subunits per hexamer contact DNA at a time. Coordinated motions by a converter formed by DNA-disengaged RuvB subunits stimulates ATP hydrolysis and nucleotide exchange. Immobilization of the converter enables RuvB to convert the ATP-contained energy into a lever motion, pulling 2 nucleotides of DNA out of the RuvA tetramer per ATP hydrolyzed, thus driving DNA branch migration. The RuvB motors rotate together with the DNA substrate, which together with the progressing nucleotide cycle form the mechanistic basis for DNA recombination by continuous HJ branch migration. Branch migration allows RuvC to scan DNA until it finds its consensus sequence, where it cleaves and resolves cruciform DNA. The polypeptide is Holliday junction branch migration complex subunit RuvB (Shewanella denitrificans (strain OS217 / ATCC BAA-1090 / DSM 15013)).